The sequence spans 163 residues: Phosphopantetheine adenylyltransferase (163 aa).

Thr9 contributes to the substrate binding site. Residues Thr9 to Phe10 and His17 each bind ATP. Substrate contacts are provided by Lys41, Leu76, and Arg90. ATP is bound by residues Gly91 to Arg93, Glu101, and His126 to Arg132.

Belongs to the bacterial CoaD family. Homohexamer. Mg(2+) is required as a cofactor.

Its subcellular location is the cytoplasm. It catalyses the reaction (R)-4'-phosphopantetheine + ATP + H(+) = 3'-dephospho-CoA + diphosphate. It participates in cofactor biosynthesis; coenzyme A biosynthesis; CoA from (R)-pantothenate: step 4/5. Functionally, reversibly transfers an adenylyl group from ATP to 4'-phosphopantetheine, yielding dephospho-CoA (dPCoA) and pyrophosphate. The sequence is that of Phosphopantetheine adenylyltransferase from Caulobacter vibrioides (strain ATCC 19089 / CIP 103742 / CB 15) (Caulobacter crescentus).